The primary structure comprises 410 residues: ORC1-type DNA replication protein 2 (410 aa).

ATP contacts are provided by residues 60 to 65 (GIGKTT), Tyr213, and Arg225.

This sequence belongs to the CDC6/cdc18 family.

Its function is as follows. Involved in regulation of DNA replication. Binds DNA. This Aeropyrum pernix (strain ATCC 700893 / DSM 11879 / JCM 9820 / NBRC 100138 / K1) protein is ORC1-type DNA replication protein 2 (orc2).